The following is a 280-amino-acid chain: MTPPILRRLDDLRALRRDWMKKGDTLGLVPTMGALHAGHLSLVEAAKAACDHVVVTIFVNPKQFNSPEDLANYPRTEHEDAQKLAPYGVDAIYVPDPDQIYPEGYATTVSLTGVTDVMEGPNRPGHFEGVATVVAKLFLQSGADRAFFGEKDYQQLMVVRRMARDLDIPIEVIGCPTVREASGLAMSSRNMRLSAAATKTAGQLNPLMEAAATRLRAGEDYAPLEAEMRAQLSDLGFAEIEYIDLRCAQDLTSLDRLDRPARMFVAAWLDGVRLIDNIAV.

Residue 32 to 39 participates in ATP binding; it reads MGALHAGH. Histidine 39 functions as the Proton donor in the catalytic mechanism. (R)-pantoate is bound at residue glutamine 63. Residue glutamine 63 participates in beta-alanine binding. 149–152 contacts ATP; the sequence is GEKD. Glutamine 155 is a binding site for (R)-pantoate. Residues valine 178 and 186 to 189 contribute to the ATP site; that span reads MSSR.

Belongs to the pantothenate synthetase family. As to quaternary structure, homodimer.

The protein resides in the cytoplasm. The catalysed reaction is (R)-pantoate + beta-alanine + ATP = (R)-pantothenate + AMP + diphosphate + H(+). It participates in cofactor biosynthesis; (R)-pantothenate biosynthesis; (R)-pantothenate from (R)-pantoate and beta-alanine: step 1/1. Catalyzes the condensation of pantoate with beta-alanine in an ATP-dependent reaction via a pantoyl-adenylate intermediate. The protein is Pantothenate synthetase of Ruegeria sp. (strain TM1040) (Silicibacter sp.).